Consider the following 57-residue polypeptide: Cecropin-A (57 aa).

Residues 1–21 (IFFFVFACLLALSAVSAAPEP) form the signal peptide.

The protein belongs to the cecropin family.

The protein resides in the secreted. Its function is as follows. Cecropins have lytic and antibacterial activity against several Gram-positive and Gram-negative bacteria. In Spodoptera litura (Asian cotton leafworm), this protein is Cecropin-A (CECA).